A 62-amino-acid polypeptide reads, in one-letter code: Sperm protamine P1 (62 aa).

The interval 1–62 is disordered; sequence MARYRHSXSR…RYSRRRRRRY (62 aa).

The protein belongs to the protamine P1 family. As to expression, testis.

It is found in the nucleus. Its subcellular location is the chromosome. Its function is as follows. Protamines substitute for histones in the chromatin of sperm during the haploid phase of spermatogenesis. They compact sperm DNA into a highly condensed, stable and inactive complex. This is Sperm protamine P1 (PRM1) from Petrogale xanthopus (Yellow-footed rock wallaby).